A 128-amino-acid chain; its full sequence is Ribonuclease pancreatic (128 aa).

The interval 1 to 23 is disordered; it reads AESSAMKFQRQHVDSEGSSSSNA. Positions 7 and 10 each coordinate substrate. The active-site Proton acceptor is the H12. 4 disulfide bridges follow: C26–C84, C40–C95, C58–C110, and C65–C72. Substrate is bound by residues 41-45, K66, and R85; that span reads KPVNT. H119 functions as the Proton donor in the catalytic mechanism.

The protein belongs to the pancreatic ribonuclease family. As to quaternary structure, monomer. Interacts with and forms tight 1:1 complexes with RNH1. Dimerization of two such complexes may occur. Interaction with RNH1 inhibits this protein. In terms of tissue distribution, pancreas.

Its subcellular location is the secreted. The catalysed reaction is an [RNA] containing cytidine + H2O = an [RNA]-3'-cytidine-3'-phosphate + a 5'-hydroxy-ribonucleotide-3'-[RNA].. It catalyses the reaction an [RNA] containing uridine + H2O = an [RNA]-3'-uridine-3'-phosphate + a 5'-hydroxy-ribonucleotide-3'-[RNA].. Functionally, endonuclease that catalyzes the cleavage of RNA on the 3' side of pyrimidine nucleotides. Acts on single-stranded and double-stranded RNA. This is Ribonuclease pancreatic (RNASE1) from Hydrochoerus hydrochaeris (Capybara).